Consider the following 76-residue polypeptide: Transcription modulator YdgT (76 aa).

Belongs to the Hha/YmoA/Cnu family.

Binds to H-NS and modifies the range of genes it silences; H-NS alone silences 'core' genes while the H-NS-Hha complex (and presumably also H-NS-YdgT) silences genes acquired by horizontal gene transfer. Plays a role silencing virulence factors in the absence of factors that induce pathogenicity. The sequence is that of Transcription modulator YdgT (ydgT) from Salmonella typhimurium (strain SL1344).